Reading from the N-terminus, the 167-residue chain is Leptin (167 aa).

The signal sequence occupies residues Met1 to Ala21. A disulfide bond links Cys117 and Cys167.

Belongs to the leptin family.

Its subcellular location is the secreted. In terms of biological role, key player in the regulation of energy balance and body weight control. Once released into the circulation, has central and peripheral effects by binding LEPR, found in many tissues, which results in the activation of several major signaling pathways. In the hypothalamus, acts as an appetite-regulating factor that induces a decrease in food intake and an increase in energy consumption by inducing anorexinogenic factors and suppressing orexigenic neuropeptides, also regulates bone mass and secretion of hypothalamo-pituitary-adrenal hormones. In the periphery, increases basal metabolism, influences reproductive function, regulates pancreatic beta-cell function and insulin secretion, is pro-angiogenic for endothelial cell and affects innate and adaptive immunity. In the arcuate nucleus of the hypothalamus, activates by depolarization POMC neurons inducing FOS and SOCS3 expression to release anorexigenic peptides and inhibits by hyperpolarization NPY neurons inducing SOCS3 with a consequent reduction on release of orexigenic peptides. In addition to its known satiety inducing effect, has a modulatory role in nutrient absorption. In the intestine, reduces glucose absorption by enterocytes by activating PKC and leading to a sequential activation of p38, PI3K and ERK signaling pathways which exerts an inhibitory effect on glucose absorption. Acts as a growth factor on certain tissues, through the activation of different signaling pathways increases expression of genes involved in cell cycle regulation such as CCND1, via JAK2-STAT3 pathway, or VEGFA, via MAPK1/3 and PI3K-AKT1 pathways. May also play an apoptotic role via JAK2-STAT3 pathway and up-regulation of BIRC5 expression. Pro-angiogenic, has mitogenic activity on vascular endothelial cells and plays a role in matrix remodeling by regulating the expression of matrix metalloproteinases (MMPs) and tissue inhibitors of metalloproteinases (TIMPs). In innate immunity, modulates the activity and function of neutrophils by increasing chemotaxis and the secretion of oxygen radicals. Increases phagocytosis by macrophages and enhances secretion of pro-inflammatory mediators. Increases cytotoxic ability of NK cells. Plays a pro-inflammatory role, in synergy with IL1B, by inducing NOS2 which promotes the production of IL6, IL8 and Prostaglandin E2, through a signaling pathway that involves JAK2, PI3K, MAP2K1/MEK1 and MAPK14/p38. In adaptive immunity, promotes the switch of memory T-cells towards T helper-1 cell immune responses. Increases CD4(+)CD25(-) T-cell proliferation and reduces autophagy during TCR (T-cell receptor) stimulation, through MTOR signaling pathway activation and BCL2 up-regulation. This chain is Leptin (LEP), found in Phoca vitulina (Harbor seal).